The chain runs to 352 residues: RNA 3'-terminal phosphate cyclase (352 aa).

Residues Gln-102 and 292 to 296 each bind ATP; that span reads HMGDQ. His-318 acts as the Tele-AMP-histidine intermediate in catalysis.

Belongs to the RNA 3'-terminal cyclase family. Type 1 subfamily.

It is found in the cytoplasm. It catalyses the reaction a 3'-end 3'-phospho-ribonucleotide-RNA + ATP = a 3'-end 2',3'-cyclophospho-ribonucleotide-RNA + AMP + diphosphate. Catalyzes the conversion of 3'-phosphate to a 2',3'-cyclic phosphodiester at the end of RNA. The mechanism of action of the enzyme occurs in 3 steps: (A) adenylation of the enzyme by ATP; (B) transfer of adenylate to an RNA-N3'P to produce RNA-N3'PP5'A; (C) and attack of the adjacent 2'-hydroxyl on the 3'-phosphorus in the diester linkage to produce the cyclic end product. The biological role of this enzyme is unknown but it is likely to function in some aspects of cellular RNA processing. The chain is RNA 3'-terminal phosphate cyclase from Methanopyrus kandleri (strain AV19 / DSM 6324 / JCM 9639 / NBRC 100938).